The following is a 91-amino-acid chain: Small ribosomal subunit protein uS19 (91 aa).

Belongs to the universal ribosomal protein uS19 family.

Functionally, protein S19 forms a complex with S13 that binds strongly to the 16S ribosomal RNA. The protein is Small ribosomal subunit protein uS19 of Burkholderia cenocepacia (strain HI2424).